A 361-amino-acid chain; its full sequence is GDP-mannose 4,6 dehydratase 1 (361 aa).

Residues 23–28 (GITGQD), 79–80 (DL), 101–105 (LAAQS), and Tyr-116 each bind NADP(+). Ser-150 is an active-site residue. Active-site nucleophile residues include Glu-152 and Tyr-173. NADP(+) contacts are provided by Lys-177, His-203, and Arg-208.

The protein belongs to the NAD(P)-dependent epimerase/dehydratase family. GDP-mannose 4,6-dehydratase subfamily. In terms of assembly, homotetramer. The cofactor is NADP(+). In terms of tissue distribution, expressed in roots,stipules and pollen just before anthesis. Primarily localized to the root meristem and columella root cap. Not expressed in emerging lateral roots.

It catalyses the reaction GDP-alpha-D-mannose = GDP-4-dehydro-alpha-D-rhamnose + H2O. The protein operates within nucleotide-sugar biosynthesis; GDP-L-fucose biosynthesis via de novo pathway; GDP-L-fucose from GDP-alpha-D-mannose: step 1/2. Functionally, catalyzes the conversion of GDP-D-mannose to GDP-4-dehydro-6-deoxy-D-mannose. The sequence is that of GDP-mannose 4,6 dehydratase 1 (GMD1) from Arabidopsis thaliana (Mouse-ear cress).